We begin with the raw amino-acid sequence, 222 residues long: Tegument protein UL26 (222 aa).

Belongs to the herpesviridae US22 family. As to quaternary structure, interacts with UL25. Interacts with ISGylation machinery components ISG15, UBA7 and HERC5; these interactions inhibit global protein ISGylation. Post-translationally, ISGylated; ISGylation regulates UL26 stability and inhibits its activities to suppress NF-kappa-B signaling.

The protein localises to the virion tegument. It localises to the host nucleus. Functionally, plays a role in the inhibition of host NF-kappa-B. This inhibition affects both the canonical and the non-canonical pathways. Blocks the induction of host IKK phosphorylation. May also influence the normal phosphorylation state of several tegument proteins including pp28 in virions. Also suppresses virus-induced ISGylation independent of its own ISGylation. The sequence is that of Tegument protein UL26 (UL26) from Homo sapiens (Human).